A 57-amino-acid chain; its full sequence is MATPKRRMSRANTRSRRSQWKATKAELVGVTVGGQKHKVPRRLLKAARLGLIDLDRR.

A compositionally biased stretch (basic residues) spans 1–19 (MATPKRRMSRANTRSRRSQ). A disordered region spans residues 1–21 (MATPKRRMSRANTRSRRSQWK).

The protein belongs to the bacterial ribosomal protein bL32 family.

This chain is Large ribosomal subunit protein bL32, found in Mycobacterium ulcerans (strain Agy99).